The chain runs to 277 residues: MKLLDFEVGINHPFFLIAGPCVIESEALALETATYLKRVTEDLGINFIYKSSYDKANRTSTNSFRGLGVKEGLRILQKVKDEVGVPVLTDVHEDTPLSEVASVVDMMQTPAFLVRQTNFIQNVCKQGIPVNIKKGQFQAPWDIGNVVNKAYETGNRLITICERGTSFGYNTLISDMRGLSTMRSTGCPIVFDATHSVQQPGGNGLTSGGQREMVPVVARAAIGVGVSGFFMETHPNPNEAFSDGPNMVPIDKIDELLKTLQELDAVTKKHGFLEDSL.

The protein belongs to the KdsA family.

The protein resides in the cytoplasm. The enzyme catalyses D-arabinose 5-phosphate + phosphoenolpyruvate + H2O = 3-deoxy-alpha-D-manno-2-octulosonate-8-phosphate + phosphate. Its pathway is carbohydrate biosynthesis; 3-deoxy-D-manno-octulosonate biosynthesis; 3-deoxy-D-manno-octulosonate from D-ribulose 5-phosphate: step 2/3. It functions in the pathway bacterial outer membrane biogenesis; lipopolysaccharide biosynthesis. The sequence is that of 2-dehydro-3-deoxyphosphooctonate aldolase from Vesicomyosocius okutanii subsp. Calyptogena okutanii (strain HA).